The chain runs to 902 residues: Cytosolic carboxypeptidase 2 (902 aa).

The Peptidase M14 domain maps to 396–666 (YPYTYTDLQC…HVCDTLLDFC (271 aa)). 3 residues coordinate Zn(2+): histidine 462, glutamate 465, and histidine 558. Residue glutamate 630 is the Proton donor/acceptor of the active site. Over residues 746–758 (FKKKKKKSLQTRK) the composition is skewed to basic residues. Disordered stretches follow at residues 746–770 (FKKKKKKSLQTRKQRNEQYQKKNLM) and 796–879 (FKNS…PRSR). Residues 853 to 866 (VSCSPKRTINSSQE) are compositionally biased toward polar residues.

It belongs to the peptidase M14 family. Interacts with RARRES1, KIF11 AND MAPRE1. Zn(2+) serves as cofactor.

The protein resides in the cytoplasm. Its subcellular location is the cytosol. It localises to the cytoskeleton. The protein localises to the microtubule organizing center. It is found in the centrosome. The protein resides in the centriole. Its subcellular location is the cilium basal body. The enzyme catalyses (L-glutamyl)(n+1)-gamma-L-glutamyl-L-glutamyl-[protein] + H2O = (L-glutamyl)(n)-gamma-L-glutamyl-L-glutamyl-[protein] + L-glutamate. With respect to regulation, inhibited by RARRES1. Functionally, metallocarboxypeptidase that mediates deglutamylation of tubulin and non-tubulin target proteins. Catalyzes the removal of polyglutamate side chains present on the gamma-carboxyl group of glutamate residues within the C-terminal tail of tubulin protein. Specifically cleaves tubulin long-side-chains, while it is not able to remove the branching point glutamate. Also catalyzes the removal of polyglutamate residues from the carboxy-terminus of non-tubulin proteins such as MYLK. The sequence is that of Cytosolic carboxypeptidase 2 from Homo sapiens (Human).